The following is a 147-amino-acid chain: Probable 4-amino-4-deoxy-L-arabinose-phosphoundecaprenol flippase subunit ArnF (147 aa).

The Cytoplasmic segment spans residues 1–23 (MSNDHPQGQLPASPARSALKGYL). A helical membrane pass occupies residues 24 to 44 (YVLGSILLVTAAQLGMKWGVI). At 45 to 62 (QLPTWQMDLAVMLAHPLP) the chain is on the periplasmic side. A helical membrane pass occupies residues 63-83 (LLVILAGVGCYALSLLCWLAA). The Cytoplasmic portion of the chain corresponds to 84–93 (LHSTPLNIAY). Residues 94–114 (PLLSTSYALVYLLAVNIPLFA) traverse the membrane as a helical segment. The Periplasmic segment spans residues 115–121 (EPLEPGK). Residues 122 to 142 (ALGVLFILLGAVLVGIKPAAG) form a helical membrane-spanning segment. Residues 143 to 147 (TKQTG) lie on the Cytoplasmic side of the membrane.

The protein belongs to the ArnF family. As to quaternary structure, heterodimer of ArnE and ArnF.

It localises to the cell inner membrane. Its pathway is bacterial outer membrane biogenesis; lipopolysaccharide biosynthesis. In terms of biological role, translocates 4-amino-4-deoxy-L-arabinose-phosphoundecaprenol (alpha-L-Ara4N-phosphoundecaprenol) from the cytoplasmic to the periplasmic side of the inner membrane. This is Probable 4-amino-4-deoxy-L-arabinose-phosphoundecaprenol flippase subunit ArnF from Aeromonas hydrophila subsp. hydrophila (strain ATCC 7966 / DSM 30187 / BCRC 13018 / CCUG 14551 / JCM 1027 / KCTC 2358 / NCIMB 9240 / NCTC 8049).